The following is a 93-amino-acid chain: Small ribosomal subunit protein uS19 (93 aa).

The protein belongs to the universal ribosomal protein uS19 family.

In terms of biological role, protein S19 forms a complex with S13 that binds strongly to the 16S ribosomal RNA. The polypeptide is Small ribosomal subunit protein uS19 (Synechococcus sp. (strain JA-2-3B'a(2-13)) (Cyanobacteria bacterium Yellowstone B-Prime)).